Consider the following 192-residue polypeptide: Elongation factor P (192 aa).

Lysine 38 is subject to N6-(3,6-diaminohexanoyl)-5-hydroxylysine.

The protein belongs to the elongation factor P family. In terms of processing, may be beta-lysylated on the epsilon-amino group of Lys-38 by the combined action of EpmA and EpmB, and then hydroxylated on the C5 position of the same residue by EpmC (if this protein is present). Lysylation is critical for the stimulatory effect of EF-P on peptide-bond formation. The lysylation moiety may extend toward the peptidyltransferase center and stabilize the terminal 3-CCA end of the tRNA. Hydroxylation of the C5 position on Lys-38 may allow additional potential stabilizing hydrogen-bond interactions with the P-tRNA.

The protein localises to the cytoplasm. It participates in protein biosynthesis; polypeptide chain elongation. Its function is as follows. Involved in peptide bond synthesis. Alleviates ribosome stalling that occurs when 3 or more consecutive Pro residues or the sequence PPG is present in a protein, possibly by augmenting the peptidyl transferase activity of the ribosome. Modification of Lys-38 is required for alleviation. This is Elongation factor P from Mannheimia succiniciproducens (strain KCTC 0769BP / MBEL55E).